Here is a 378-residue protein sequence, read N- to C-terminus: tRNA-specific 2-thiouridylase MnmA (378 aa).

ATP-binding positions include 14 to 21 (AMSGGVDS) and L40. The active-site Nucleophile is the C109. The cysteines at positions 109 and 208 are disulfide-linked. G133 is an ATP binding site. Residues 156–158 (KDQ) are interaction with tRNA. The active-site Cysteine persulfide intermediate is C208.

Belongs to the MnmA/TRMU family.

It is found in the cytoplasm. It catalyses the reaction S-sulfanyl-L-cysteinyl-[protein] + uridine(34) in tRNA + AH2 + ATP = 2-thiouridine(34) in tRNA + L-cysteinyl-[protein] + A + AMP + diphosphate + H(+). Functionally, catalyzes the 2-thiolation of uridine at the wobble position (U34) of tRNA, leading to the formation of s(2)U34. The polypeptide is tRNA-specific 2-thiouridylase MnmA (Streptomyces griseus subsp. griseus (strain JCM 4626 / CBS 651.72 / NBRC 13350 / KCC S-0626 / ISP 5235)).